A 688-amino-acid chain; its full sequence is Glycine--tRNA ligase beta subunit (688 aa).

Belongs to the class-II aminoacyl-tRNA synthetase family. As to quaternary structure, tetramer of two alpha and two beta subunits.

The protein localises to the cytoplasm. The enzyme catalyses tRNA(Gly) + glycine + ATP = glycyl-tRNA(Gly) + AMP + diphosphate. This Geotalea uraniireducens (strain Rf4) (Geobacter uraniireducens) protein is Glycine--tRNA ligase beta subunit.